The primary structure comprises 696 residues: Elongation factor G (696 aa).

Residues Glu8–Ala290 enclose the tr-type G domain. Residues Ala17–Thr24, Asp88–His92, and Asn142–Asp145 each bind GTP.

It belongs to the TRAFAC class translation factor GTPase superfamily. Classic translation factor GTPase family. EF-G/EF-2 subfamily.

Its subcellular location is the cytoplasm. Functionally, catalyzes the GTP-dependent ribosomal translocation step during translation elongation. During this step, the ribosome changes from the pre-translocational (PRE) to the post-translocational (POST) state as the newly formed A-site-bound peptidyl-tRNA and P-site-bound deacylated tRNA move to the P and E sites, respectively. Catalyzes the coordinated movement of the two tRNA molecules, the mRNA and conformational changes in the ribosome. The sequence is that of Elongation factor G from Nitrosospira multiformis (strain ATCC 25196 / NCIMB 11849 / C 71).